An 82-amino-acid chain; its full sequence is Small ribosomal subunit protein uS17 (82 aa).

Belongs to the universal ribosomal protein uS17 family. In terms of assembly, part of the 30S ribosomal subunit.

In terms of biological role, one of the primary rRNA binding proteins, it binds specifically to the 5'-end of 16S ribosomal RNA. The chain is Small ribosomal subunit protein uS17 from Shewanella piezotolerans (strain WP3 / JCM 13877).